We begin with the raw amino-acid sequence, 236 residues long: MAKKQEFTFKQFHINQDQCAMKVGTDGILLGAWANINQANTLLDLGTGTGLIALMLAQRSPEHCHISAVELDPQAYLQAKDNIQQSPWANKIKIFQQDIIVFAQDCEHKFDVITANPPYFKQGIDCASKQRNLARYTLTQSHLDWLNAAEKLLNLTGEIHLILPFEEGKSLQKKCGLFCIRECKIITKAGKTPQRLLLSFSREERKCEESQLVIYDRNNQYSTEFKTLTQDFYLNF.

This sequence belongs to the methyltransferase superfamily. tRNA (adenine-N(6)-)-methyltransferase family.

Its subcellular location is the cytoplasm. It carries out the reaction adenosine(37) in tRNA1(Val) + S-adenosyl-L-methionine = N(6)-methyladenosine(37) in tRNA1(Val) + S-adenosyl-L-homocysteine + H(+). Functionally, specifically methylates the adenine in position 37 of tRNA(1)(Val) (anticodon cmo5UAC). In Histophilus somni (strain 129Pt) (Haemophilus somnus), this protein is tRNA1(Val) (adenine(37)-N6)-methyltransferase.